The following is a 465-amino-acid chain: Lysophospholipid acyltransferase 2 (465 aa).

9 helical membrane-spanning segments follow: residues V15–L35, F55–I75, L86–Y106, S161–F181, A214–L234, Y266–W286, A356–I376, V399–F419, and V434–V454. The active site involves H359.

It belongs to the membrane-bound acyltransferase family. In terms of assembly, interacts with GPAT9 and DGAT1. In terms of tissue distribution, expressed in rosette leaves, pollen grains, developing embryos and developing seeds.

It is found in the endoplasmic reticulum membrane. It carries out the reaction a 1-acyl-sn-glycero-3-phosphocholine + an acyl-CoA = a 1,2-diacyl-sn-glycero-3-phosphocholine + CoA. It catalyses the reaction 1-(9Z-octadecenoyl)-sn-glycero-3-phosphocholine + (9Z)-octadecenoyl-CoA = 1,2-di-(9Z-octadecenoyl)-sn-glycero-3-phosphocholine + CoA. The catalysed reaction is 1-(9Z-octadecenoyl)-sn-glycero-3-phosphocholine + (9Z,12Z)-octadecadienoyl-CoA = 1-(9Z)-octadecenoyl-2-(9Z,12Z)-octadecadienoyl-sn-glycero-3-phosphocholine + CoA. The enzyme catalyses (9Z,12Z,15Z)-octadecatrienoyl-CoA + 1-(9Z-octadecenoyl)-sn-glycero-3-phosphocholine = 1-(9Z-octadecaenoyl)-2-(9Z,12Z,15Z-octadecatrienoyl)-sn-glycero-3-phosphocholine + CoA. It carries out the reaction a 1-acyl-sn-glycero-3-phosphoethanolamine + an acyl-CoA = a 1,2-diacyl-sn-glycero-3-phosphoethanolamine + CoA. It catalyses the reaction a 1-acyl-sn-glycero-3-phospho-L-serine + an acyl-CoA = a 1,2-diacyl-sn-glycero-3-phospho-L-serine + CoA. Functionally, lysophospholipid acyltransferase with broad specificity. Mediates the conversion of lysophosphatidylethanolamine (1-acyl-sn-glycero-3-phosphoethanolamine or LPE) into phosphatidylethanolamine (1,2-diacyl-sn-glycero-3-phosphoethanolamine or PE) (LPEAT activity). Catalyzes the acylation of lysophosphatidylserine (1-acyl-2-hydroxy-sn-glycero-3-phospho-L-serine or LPS) into phosphatidylserine (1,2-diacyl-sn-glycero-3-phospho-L-serine or PS) (LPSAT activity). Can convert lysophosphatidylcholine (1-acyl-sn-glycero-3-phosphocholine or LPC) into phosphatidylcholine (1,2-diacyl-sn-glycero-3-phosphocholine or PC) (LPCAT activity). Exhibits preference for C18-unsaturated acyl-CoA when transferring an acyl group to lysophosphatidylcholine. Can also utilize lysophosphatidylglycerol (LPG) as substrate in vitro. Has neither activity towards lysophosphatidic acid (LPA) nor lysophosphatidylinositol (LPI). Lysophospholipid acyltransferases catalyze the reacylation step of the phospholipid remodeling pathway also known as the Lands cycle. The primary function of the Lands cycle is to provide a route for acyl remodeling to modify fatty acid (FA) composition of phospholipids derived from the Kennedy pathway. Is involved in PC acyl editing and phosphocholine headgroup exchange between PC and diacylglycerols. This processes control the majority of acyl fluxes through PC to provide polyunsaturated fatty acids for triacylglycerols synthesis in seeds. Involved with LPCAT1 in the direct incorporation of newly synthesized fatty acids exported form the chloroplast into PC through acyl editing. The polypeptide is Lysophospholipid acyltransferase 2 (Arabidopsis thaliana (Mouse-ear cress)).